The chain runs to 778 residues: Degenerin deg-1 (778 aa).

Residues 1 to 82 (MSNHHSKTKK…IARNSFSKLM (82 aa)) lie on the Cytoplasmic side of the membrane. A helical transmembrane segment spans residues 83-103 (WGLIIFSFLLMFAYQASKLIF). Residues 104–711 (KFSAHEKITD…LVNLIADFGG (608 aa)) lie on the Extracellular side of the membrane. Basic and acidic residues predominate over residues 154-165 (NAKTHSKSEGEK). Disordered regions lie at residues 154–180 (NAKTHSKSEGEKKKPKVSRKQHSDASQ) and 201–220 (SNKTLQSQNKSGRRRSQRSI). Residues N202, N209, N272, and N342 are each glycosylated (N-linked (GlcNAc...) asparagine). A compositionally biased stretch (low complexity) spans 346–369 (TSTTTTTTTTPPPTTTSTTTTTTT). Positions 346–380 (TSTTTTTTTTPPPTTTSTTTTTTTTPPPTTTARPN) are disordered. N-linked (GlcNAc...) asparagine glycosylation is found at N473, N492, and N606. Residues 712 to 732 (HLGLWLGFSVITVMEVCVLLV) traverse the membrane as a helical segment. The Cytoplasmic segment spans residues 733–778 (DMISLFFKSRHEEKLLRQSTKRKDVPEDKRQITVGSGRKSDAFVSI).

Belongs to the amiloride-sensitive sodium channel (TC 1.A.6) family.

Its subcellular location is the membrane. Its function is as follows. Probable sodium channel subunit. Required by a subset of neurons. This is Degenerin deg-1 from Caenorhabditis elegans.